Reading from the N-terminus, the 290-residue chain is MTGHAPLVGVIGGSGLYKLEGIEPVESLNIDTPWGRPSSPITLFKLPSGPVVAFLARHGVSHQFTPSEVPSRANIAALKKIGCQVIIAFSAVGSLREEIKPRDIVVPSQIIDRTKSAHAMFGEPFDTELTGLVTKSIKEAVTGFEMNDRIGVHAEKVAICMEGPAFSTRAESNMYRMFGGDIINMSVLPEAKLAREAELSYALIAQITDYDAWRESEEPVTVAEVMATIAANVSVSNRLTLTILDEVHNAVAKGQLKTCKGTMEYSVMTKKEMISEESKKTLSFILPYFS.

Residues Ser-14, 57–58 (RH), and 90–91 (SA) each bind phosphate. Residue Met-185 participates in substrate binding. Position 186 (Ser-186) interacts with phosphate. 209–211 (DYD) is a substrate binding site.

Belongs to the PNP/MTAP phosphorylase family. MTAP subfamily. Homotrimer.

Its subcellular location is the cytoplasm. It is found in the nucleus. The catalysed reaction is S-methyl-5'-thioadenosine + phosphate = 5-(methylsulfanyl)-alpha-D-ribose 1-phosphate + adenine. It functions in the pathway amino-acid biosynthesis; L-methionine biosynthesis via salvage pathway; S-methyl-5-thio-alpha-D-ribose 1-phosphate from S-methyl-5'-thioadenosine (phosphorylase route): step 1/1. Its function is as follows. Catalyzes the reversible phosphorylation of S-methyl-5'-thioadenosine (MTA) to adenine and 5-methylthioribose-1-phosphate. Involved in the breakdown of MTA, a major by-product of polyamine biosynthesis. Responsible for the first step in the methionine salvage pathway after MTA has been generated from S-adenosylmethionine. Has broad substrate specificity with 6-aminopurine nucleosides as preferred substrates. The protein is S-methyl-5'-thioadenosine phosphorylase 2 of Puccinia graminis f. sp. tritici (strain CRL 75-36-700-3 / race SCCL) (Black stem rust fungus).